The chain runs to 130 residues: Small ribosomal subunit protein uS8 (130 aa).

This sequence belongs to the universal ribosomal protein uS8 family. As to quaternary structure, part of the 30S ribosomal subunit. Contacts proteins S5 and S12.

Functionally, one of the primary rRNA binding proteins, it binds directly to 16S rRNA central domain where it helps coordinate assembly of the platform of the 30S subunit. In Aliivibrio fischeri (strain ATCC 700601 / ES114) (Vibrio fischeri), this protein is Small ribosomal subunit protein uS8.